The following is a 79-amino-acid chain: Aquaporin Z (79 aa).

A run of 2 helical transmembrane segments spans residues 4-24 (LFAE…SAVF) and 33-53 (IGFA…AYAV). Positions 62–64 (NPA) match the NPA 1 motif.

It belongs to the MIP/aquaporin (TC 1.A.8) family. In terms of assembly, homotetramer.

The protein localises to the cell membrane. It carries out the reaction H2O(in) = H2O(out). Its function is as follows. Channel that permits osmotically driven movement of water in both directions. It is involved in the osmoregulation and in the maintenance of cell turgor during volume expansion in rapidly growing cells. It mediates rapid entry or exit of water in response to abrupt changes in osmolarity. In Flavobacterium johnsoniae (Cytophaga johnsonae), this protein is Aquaporin Z.